A 147-amino-acid chain; its full sequence is Large ribosomal subunit protein uL15 (147 aa).

Positions 1–57 (MKLHELKSAPKSRNHKAKVVGRGHGSGLGKTSGRGQKGQKARKSGRTRPGFEGGQTP) are disordered. Over residues 10–21 (PKSRNHKAKVVG) the composition is skewed to basic residues. Residues 22–36 (RGHGSGLGKTSGRGQ) are compositionally biased toward gly residues. Residues 37–46 (KGQKARKSGR) show a composition bias toward basic residues.

Belongs to the universal ribosomal protein uL15 family. In terms of assembly, part of the 50S ribosomal subunit.

Binds to the 23S rRNA. This is Large ribosomal subunit protein uL15 from Mycoplasmoides gallisepticum (strain R(low / passage 15 / clone 2)) (Mycoplasma gallisepticum).